The chain runs to 460 residues: GTPase Der (460 aa).

EngA-type G domains are found at residues 21–187 and 198–373; these read PRVV…FSVD and VRLA…AQLN. GTP-binding positions include 27–34, 74–78, 141–144, 204–211, 251–255, and 316–319; these read GRPNVGKS, DTSGF, NKTE, GKPNTGKS, DTAGI, and NKWD. The KH-like domain maps to 374-457; that stretch reads TKVETSALNT…PVKLTIRKNC (84 aa).

It belongs to the TRAFAC class TrmE-Era-EngA-EngB-Septin-like GTPase superfamily. EngA (Der) GTPase family. As to quaternary structure, associates with the 50S ribosomal subunit.

In terms of biological role, GTPase that plays an essential role in the late steps of ribosome biogenesis. This chain is GTPase Der, found in Treponema pallidum subsp. pallidum (strain SS14).